A 231-amino-acid polypeptide reads, in one-letter code: uncharacterized protein (231 aa).

The next 6 helical transmembrane spans lie at 4-24 (YIIY…LQIS), 29-49 (SMIF…LVIG), 58-78 (AGNA…ALPL), 95-115 (TVVI…LLLG), 147-167 (VTAV…YLVL), and 211-231 (LCGI…YFFV).

This sequence belongs to the YohK (E.coli)/YwbG (IPA-22R) (B.subtilis) family.

It is found in the cell membrane. This is an uncharacterized protein from Haemophilus influenzae (strain ATCC 51907 / DSM 11121 / KW20 / Rd).